Here is a 387-residue protein sequence, read N- to C-terminus: Phosphoglycerate kinase (387 aa).

Substrate contacts are provided by residues 21-23, Arg36, 59-62, Arg113, and Arg146; these read DLN and HLGR. ATP contacts are provided by residues Lys197, Glu314, and 340–343; that span reads GGDT.

The protein belongs to the phosphoglycerate kinase family. Monomer.

The protein localises to the cytoplasm. It carries out the reaction (2R)-3-phosphoglycerate + ATP = (2R)-3-phospho-glyceroyl phosphate + ADP. It participates in carbohydrate degradation; glycolysis; pyruvate from D-glyceraldehyde 3-phosphate: step 2/5. The chain is Phosphoglycerate kinase from Aliivibrio fischeri (strain ATCC 700601 / ES114) (Vibrio fischeri).